Reading from the N-terminus, the 283-residue chain is Cardiolipin synthase (CMP-forming) (283 aa).

A run of 3 helical transmembrane segments spans residues 83-103 (PFIGLFIITNNLTPALGLFAF), 155-175 (VSIAAIILGRDVLLAISALFI), and 209-229 (LSKWNTFFQMVYLGSGVLLLL).

The protein belongs to the CDP-alcohol phosphatidyltransferase class-I family. As to quaternary structure, may be found in a large complex. The cofactor is Mg(2+).

Its subcellular location is the mitochondrion inner membrane. It catalyses the reaction a CDP-1,2-diacyl-sn-glycerol + a 1,2-diacyl-sn-glycero-3-phospho-(1'-sn-glycerol) = a cardiolipin + CMP + H(+). Catalyzes the synthesis of cardiolipin (CL) (diphosphatidylglycerol) by specifically transferring a phosphatidyl group from CDP-diacylglycerol to phosphatidylglycerol (PG). CL is a key phospholipid in mitochondrial membranes and plays important roles in maintaining the functional integrity and dynamics of mitochondria under both optimal and stress conditions. The chain is Cardiolipin synthase (CMP-forming) (CRD1) from Saccharomyces cerevisiae (strain ATCC 204508 / S288c) (Baker's yeast).